A 132-amino-acid polypeptide reads, in one-letter code: Small ribosomal subunit protein uS8 (132 aa).

Belongs to the universal ribosomal protein uS8 family. As to quaternary structure, part of the 30S ribosomal subunit. Contacts proteins S5 and S12.

One of the primary rRNA binding proteins, it binds directly to 16S rRNA central domain where it helps coordinate assembly of the platform of the 30S subunit. The sequence is that of Small ribosomal subunit protein uS8 from Alkaliphilus metalliredigens (strain QYMF).